Consider the following 373-residue polypeptide: Putative aminopeptidase SgcX (373 aa).

Histidine 67 and aspartate 180 together coordinate a divalent metal cation. The Proton acceptor role is filled by glutamate 212. The a divalent metal cation site is built by glutamate 213, aspartate 235, and histidine 329.

It belongs to the peptidase M42 family. It depends on a divalent metal cation as a cofactor.

The chain is Putative aminopeptidase SgcX (sgcX) from Escherichia coli (strain K12).